Here is a 553-residue protein sequence, read N- to C-terminus: MATDMSQGELIHPKALPLIVGAQLIHADKLGEKADDSTMPIRRAVNSTRETPPKSKLAEGEEEKPEPDGSSEESISTVEEPENETPPAPSREAEQPKGEPESGEKEESKSAEETKKEEKDQSKEKEKKVKKTIPAWATLSASQLARAQKQTPMASSPRPKMDAILTEAIKACFQKSGASVVAIRKYIIHKYPSLDLERRGYLLKQALKRELNRGVIKQVKGKGASGSFVVVQKSKTPQKSKNRKKGSAVDPEPQVKLEDVLPLAFTRLCEPKEASYSLIRKYVSQYYPKLRVDIRPQLLKNALQRAVERGQLEQITGKGASGTFQLKKSGEKPLLGGSLMEYAILSAIAAMNEPKTCSTTALKKYVLENHPGTNSNYQMHLLKKTLQKCEKNGWLEQISGKGFSGTFQLCFPYYPSPGVLFPKKVSDGSEDEDEEEDEEESSEDSEDEEPPPKRSLQKKTPAKPQGKTASMKQRGAKPARKVPAAQRGKVRPLPKKAPPKAKTPARKGRPAPSAVKKPSGSTSKKPVANARKEAKLPGKGKSAMKKKSFKTKK.

Residue A2 is modified to N-acetylalanine. At S6 the chain carries Phosphoserine. Positions 30-131 are disordered; that stretch reads LGEKADDSTM…SKEKEKKVKK (102 aa). T51 bears the Phosphothreonine mark. Residues 60-71 are compositionally biased toward acidic residues; sequence GEEEKPEPDGSS. A Glycyl lysine isopeptide (Lys-Gly) (interchain with G-Cter in SUMO2) cross-link involves residue K64. Position 85 is a phosphothreonine (T85). The span at 91 to 127 shows a compositional bias: basic and acidic residues; it reads REAEQPKGEPESGEKEESKSAEETKKEEKDQSKEKEK. A Glycyl lysine isopeptide (Lys-Gly) (interchain with G-Cter in SUMO2) cross-link involves residue K97. Residues S142, S155, and S156 each carry the phosphoserine modification. Residues 157-232 enclose the H15 1 domain; the sequence is PRPKMDAILT…GASGSFVVVQ (76 aa). Position 190 is an N6-acetyllysine (K190). The interval 231-251 is disordered; sequence VQKSKTPQKSKNRKKGSAVDP. Basic residues predominate over residues 236-246; that stretch reads TPQKSKNRKKG. Residue S247 is modified to Phosphoserine. Residues 253-257 carry the PxVxL motif motif; sequence PQVKL. 2 H15 domains span residues 253–328 and 335–411; these read PQVK…QLKK and LGGS…QLCF. A Glycyl lysine isopeptide (Lys-Gly) (interchain with G-Cter in SUMO2) cross-link involves residue K256. The disordered stretch occupies residues 422–553; sequence PKKVSDGSED…MKKKSFKTKK (132 aa). Residues 428–449 show a composition bias toward acidic residues; the sequence is GSEDEDEEEDEEESSEDSEDEE. S441, S442, and S445 each carry phosphoserine. 2 stretches are compositionally biased toward basic residues: residues 488–509 and 542–553; these read GKVR…RKGR and SAMKKKSFKTKK.

In terms of assembly, interacts (via PxVxL motif) with CBX5.

It is found in the nucleus. Its subcellular location is the chromosome. Component of heterochromatin that maintains heterochromatin integrity during G1/S progression and regulates the duration of G1 phase to critically influence cell proliferative capacity. May play a role in hypoxia-induced oncogenesis. The polypeptide is Heterochromatin protein 1-binding protein 3 (Hp1bp3) (Rattus norvegicus (Rat)).